A 63-amino-acid polypeptide reads, in one-letter code: Anionic peptide 10.1 (63 aa).

The N-terminal stretch at 1 to 20 (MISRFCLLFLLVFVVSKIQA) is a signal peptide.

The protein belongs to the non-disulfide-bridged peptide (NDBP) superfamily. Long chain multifunctional peptide (group 2) family. Expressed by the venom gland.

It is found in the secreted. The sequence is that of Anionic peptide 10.1 from Lychas mucronatus (Chinese swimming scorpion).